The sequence spans 204 residues: Late expression factor 2 (204 aa).

This sequence belongs to the baculoviridae LEF-2 family.

Functionally, required for late and very late gene expression. Specifically required for expression from the vp39 and polh promoters. The chain is Late expression factor 2 (LEF-2) from Anticarsia gemmatalis nuclear polyhedrosis virus (AgMNPV).